The following is a 93-amino-acid chain: MQADQVLKLVRLSEKSNKLSSELGQYTFEVFKGTNKHQIAEAVEQTFKVTVKRVNVQNYRGKNKKSRTGRPSVGSDYKKAIVTLKAGDKIELV.

The protein belongs to the universal ribosomal protein uL23 family. In terms of assembly, part of the 50S ribosomal subunit. Contacts protein L29, and trigger factor when it is bound to the ribosome.

Functionally, one of the early assembly proteins it binds 23S rRNA. One of the proteins that surrounds the polypeptide exit tunnel on the outside of the ribosome. Forms the main docking site for trigger factor binding to the ribosome. This Opitutus terrae (strain DSM 11246 / JCM 15787 / PB90-1) protein is Large ribosomal subunit protein uL23.